Consider the following 347-residue polypeptide: Biotin synthase (347 aa).

Residues 40–258 enclose the Radical SAM core domain; sequence AQVQVSTLLS…IAVARIVMPR (219 aa). [4Fe-4S] cluster contacts are provided by Cys-55, Cys-59, and Cys-62. [2Fe-2S] cluster-binding residues include Cys-99, Cys-130, Cys-190, and Arg-262.

The protein belongs to the radical SAM superfamily. Biotin synthase family. Homodimer. [4Fe-4S] cluster serves as cofactor. The cofactor is [2Fe-2S] cluster.

It carries out the reaction (4R,5S)-dethiobiotin + (sulfur carrier)-SH + 2 reduced [2Fe-2S]-[ferredoxin] + 2 S-adenosyl-L-methionine = (sulfur carrier)-H + biotin + 2 5'-deoxyadenosine + 2 L-methionine + 2 oxidized [2Fe-2S]-[ferredoxin]. It participates in cofactor biosynthesis; biotin biosynthesis; biotin from 7,8-diaminononanoate: step 2/2. In terms of biological role, catalyzes the conversion of dethiobiotin (DTB) to biotin by the insertion of a sulfur atom into dethiobiotin via a radical-based mechanism. The chain is Biotin synthase from Stenotrophomonas maltophilia (strain R551-3).